Consider the following 318-residue polypeptide: Acetaldehyde dehydrogenase 2 (318 aa).

9 to 12 (SGNI) contributes to the NAD(+) binding site. The Acyl-thioester intermediate role is filled by C129. Residues 160 to 168 (SAGPGTRAN) and N288 each bind NAD(+).

This sequence belongs to the acetaldehyde dehydrogenase family.

The catalysed reaction is acetaldehyde + NAD(+) + CoA = acetyl-CoA + NADH + H(+). The sequence is that of Acetaldehyde dehydrogenase 2 from Mycolicibacterium vanbaalenii (strain DSM 7251 / JCM 13017 / BCRC 16820 / KCTC 9966 / NRRL B-24157 / PYR-1) (Mycobacterium vanbaalenii).